Reading from the N-terminus, the 479-residue chain is Aspartyl/glutamyl-tRNA(Asn/Gln) amidotransferase subunit B (479 aa).

This sequence belongs to the GatB/GatE family. GatB subfamily. In terms of assembly, heterotrimer of A, B and C subunits.

It catalyses the reaction L-glutamyl-tRNA(Gln) + L-glutamine + ATP + H2O = L-glutaminyl-tRNA(Gln) + L-glutamate + ADP + phosphate + H(+). The catalysed reaction is L-aspartyl-tRNA(Asn) + L-glutamine + ATP + H2O = L-asparaginyl-tRNA(Asn) + L-glutamate + ADP + phosphate + 2 H(+). Allows the formation of correctly charged Asn-tRNA(Asn) or Gln-tRNA(Gln) through the transamidation of misacylated Asp-tRNA(Asn) or Glu-tRNA(Gln) in organisms which lack either or both of asparaginyl-tRNA or glutaminyl-tRNA synthetases. The reaction takes place in the presence of glutamine and ATP through an activated phospho-Asp-tRNA(Asn) or phospho-Glu-tRNA(Gln). This chain is Aspartyl/glutamyl-tRNA(Asn/Gln) amidotransferase subunit B, found in Mycoplasma mycoides subsp. mycoides SC (strain CCUG 32753 / NCTC 10114 / PG1).